Consider the following 125-residue polypeptide: Ribosome-binding factor A (125 aa).

Belongs to the RbfA family. In terms of assembly, monomer. Binds 30S ribosomal subunits, but not 50S ribosomal subunits or 70S ribosomes.

The protein localises to the cytoplasm. Functionally, one of several proteins that assist in the late maturation steps of the functional core of the 30S ribosomal subunit. Associates with free 30S ribosomal subunits (but not with 30S subunits that are part of 70S ribosomes or polysomes). Required for efficient processing of 16S rRNA. May interact with the 5'-terminal helix region of 16S rRNA. The protein is Ribosome-binding factor A of Methylobacillus flagellatus (strain ATCC 51484 / DSM 6875 / VKM B-1610 / KT).